Reading from the N-terminus, the 320-residue chain is Porphobilinogen deaminase (320 aa).

Cys251 is modified (S-(dipyrrolylmethanemethyl)cysteine).

This sequence belongs to the HMBS family. As to quaternary structure, monomer. Requires dipyrromethane as cofactor.

It carries out the reaction 4 porphobilinogen + H2O = hydroxymethylbilane + 4 NH4(+). It functions in the pathway porphyrin-containing compound metabolism; protoporphyrin-IX biosynthesis; coproporphyrinogen-III from 5-aminolevulinate: step 2/4. Its function is as follows. Tetrapolymerization of the monopyrrole PBG into the hydroxymethylbilane pre-uroporphyrinogen in several discrete steps. The protein is Porphobilinogen deaminase of Phenylobacterium zucineum (strain HLK1).